The chain runs to 622 residues: Phosphoenolpyruvate carboxykinase [GTP] (622 aa).

Substrate contacts are provided by residues Arg-86 and 220-222; that span reads YGG. Mn(2+)-binding residues include Lys-229 and His-248. Ser-270 provides a ligand contact to substrate. Residue 271–276 coordinates GTP; it reads MCGKTS. Residue Cys-272 is part of the active site. Asp-289 contributes to the Mn(2+) binding site. Positions 360–374 are enriched in basic and acidic residues; that stretch reads ENHSGKWWRGKKDSE. The interval 360–381 is disordered; it reads ENHSGKWWRGKKDSEGNEISPS. 384 to 386 serves as a coordination point for substrate; that stretch reads NAR. Residues Arg-386 and Arg-418 each contribute to the GTP site.

It belongs to the phosphoenolpyruvate carboxykinase [GTP] family. Requires Mn(2+) as cofactor.

It localises to the cytoplasm. The catalysed reaction is oxaloacetate + GTP = phosphoenolpyruvate + GDP + CO2. It functions in the pathway carbohydrate biosynthesis; gluconeogenesis. Its function is as follows. Catalyzes the conversion of oxaloacetate (OAA) to phosphoenolpyruvate (PEP), the rate-limiting step in the metabolic pathway that produces glucose from lactate and other precursors derived from the citric acid cycle. This is Phosphoenolpyruvate carboxykinase [GTP] from Thermococcus sibiricus (strain DSM 12597 / MM 739).